A 557-amino-acid chain; its full sequence is Dihydroxy-acid dehydratase (557 aa).

Asp-78 contacts Mg(2+). Cys-119 is a binding site for [2Fe-2S] cluster. 2 residues coordinate Mg(2+): Asp-120 and Lys-121. Residue Lys-121 is modified to N6-carboxylysine. [2Fe-2S] cluster is bound at residue Cys-194. Residue Glu-446 coordinates Mg(2+). The Proton acceptor role is filled by Ser-472.

The protein belongs to the IlvD/Edd family. Homodimer. It depends on [2Fe-2S] cluster as a cofactor. Mg(2+) serves as cofactor.

The catalysed reaction is (2R)-2,3-dihydroxy-3-methylbutanoate = 3-methyl-2-oxobutanoate + H2O. It carries out the reaction (2R,3R)-2,3-dihydroxy-3-methylpentanoate = (S)-3-methyl-2-oxopentanoate + H2O. The protein operates within amino-acid biosynthesis; L-isoleucine biosynthesis; L-isoleucine from 2-oxobutanoate: step 3/4. It participates in amino-acid biosynthesis; L-valine biosynthesis; L-valine from pyruvate: step 3/4. In terms of biological role, functions in the biosynthesis of branched-chain amino acids. Catalyzes the dehydration of (2R,3R)-2,3-dihydroxy-3-methylpentanoate (2,3-dihydroxy-3-methylvalerate) into 2-oxo-3-methylpentanoate (2-oxo-3-methylvalerate) and of (2R)-2,3-dihydroxy-3-methylbutanoate (2,3-dihydroxyisovalerate) into 2-oxo-3-methylbutanoate (2-oxoisovalerate), the penultimate precursor to L-isoleucine and L-valine, respectively. This is Dihydroxy-acid dehydratase from Desulfosudis oleivorans (strain DSM 6200 / JCM 39069 / Hxd3) (Desulfococcus oleovorans).